The following is a 208-amino-acid chain: Uridine kinase (208 aa).

11 to 18 (GGTGSGKS) contributes to the ATP binding site.

Belongs to the uridine kinase family.

The protein localises to the cytoplasm. The catalysed reaction is uridine + ATP = UMP + ADP + H(+). It catalyses the reaction cytidine + ATP = CMP + ADP + H(+). It participates in pyrimidine metabolism; CTP biosynthesis via salvage pathway; CTP from cytidine: step 1/3. The protein operates within pyrimidine metabolism; UMP biosynthesis via salvage pathway; UMP from uridine: step 1/1. This chain is Uridine kinase, found in Alkaliphilus metalliredigens (strain QYMF).